The following is a 1283-amino-acid chain: Protein kibra (1283 aa).

Polar residues predominate over residues 1-13; that stretch reads MPNLQQTASQSQH. A disordered region spans residues 1–59; sequence MPNLQQTASQSQHHLYPPHLRPHHHHQQQQHHQQQQQQQHTHHQQQQQHHSDFPLPDGW. The segment covering 20 to 29 has biased composition (basic residues); the sequence is LRPHHHHQQQ. The segment covering 30 to 48 has biased composition (low complexity); that stretch reads QHHQQQQQQQHTHHQQQQQ. WW domains follow at residues 53 to 86 and 100 to 133; these read FPLPDGWDIAKDFDGKTYYIDHINKKTTWLDPRD and DELPMGWEESYDPNIGPYYINHLAQSTQLEDPRQ. Coiled coils occupy residues 200-228 and 334-462; these read ELLRADLMLARERVHQLKQELTHITNDIS and AEMA…KSFS. Over residues 537–549 the composition is skewed to polar residues; that stretch reads AEVTLSPRSSLSM. Residues 537 to 559 are disordered; it reads AEVTLSPRSSLSMETPPASPMKY. In terms of domain architecture, C2 spans 690 to 810; it reads ELAQVQIGLK…NPEDSTLKWY (121 aa). Disordered stretches follow at residues 840–871, 887–910, and 941–969; these read ASNAPSSGNNREESSDESTITSSQTSTLTRNQ, ELGPLNEPECSDDDDEDEEEELDD, and ETNTDRAYLPEKSRGQSQLMDDRPVKRSQ. Over residues 856 to 868 the composition is skewed to low complexity; that stretch reads ESTITSSQTSTLT. A compositionally biased stretch (acidic residues) spans 895–909; that stretch reads ECSDDDDEDEEEELD. Residues 941–965 are compositionally biased toward basic and acidic residues; sequence ETNTDRAYLPEKSRGQSQLMDDRPV. Residues 1048-1075 are a coiled coil; that stretch reads SKLYFLNDQIAKLQNLKEVLQKACENKD. Positions 1197–1263 are disordered; it reads NKNLSEHPHR…PAAAPIPVAS (67 aa). The span at 1217 to 1262 shows a compositional bias: low complexity; that stretch reads APVATPAATPAATPAATPVATPAATPVVATAAQPEAKPAAAPIPVA.

It belongs to the WWC family. KIBRA subfamily. In terms of assembly, forms a complex with Mer and Ex. Interacts (via domain WW 1) with Ex (via RXPPXY motif). Interacts with Mer, Sav, Hpo and Wts.

It localises to the cytoplasm. The protein localises to the apical cell membrane. Functionally, regulator of the Hippo/SWH (Sav/Wts/Hpo) signaling pathway, a signaling pathway that plays a pivotal role in organ size control and tumor suppression by restricting proliferation and promoting apoptosis. The core of this pathway is composed of a kinase cascade wherein Hippo (Hpo), in complex with its regulatory protein Salvador (Sav), phosphorylates and activates Warts (Wts) in complex with its regulatory protein Mats, which in turn phosphorylates and inactivates the Yorkie (Yki) oncoprotein. Kibra acts synergistically along with Ex and Mer to regulate the Hippo signaling pathway. This chain is Protein kibra (Kibra), found in Drosophila erecta (Fruit fly).